The chain runs to 1622 residues: WD repeat-containing protein 97 (1622 aa).

WD repeat units follow at residues 187–233 (SEQG…RRLV), 290–329 (LHKT…RMVF), 331–370 (GHTG…QVGE), 552–592 (ELRC…TVFQ), 594–633 (EAHS…EESL), and 687–726 (DPTD…LRLL). Disordered regions lie at residues 1090–1112 (GEKP…EDEE) and 1453–1472 (LHPA…EETD). Residues 1094-1118 (GEEGEEDKKEEEEEKEDEELDWALA) are a coiled coil. Acidic residues predominate over residues 1096–1112 (EGEEDKKEEEEEKEDEE).

The polypeptide is WD repeat-containing protein 97 (Homo sapiens (Human)).